A 324-amino-acid chain; its full sequence is N-acetyl-gamma-glutamyl-phosphate reductase (324 aa).

Cys-131 is an active-site residue.

It belongs to the NAGSA dehydrogenase family. Type 1 subfamily.

It is found in the cytoplasm. The enzyme catalyses N-acetyl-L-glutamate 5-semialdehyde + phosphate + NADP(+) = N-acetyl-L-glutamyl 5-phosphate + NADPH + H(+). It participates in amino-acid biosynthesis; L-arginine biosynthesis; N(2)-acetyl-L-ornithine from L-glutamate: step 3/4. Catalyzes the NADPH-dependent reduction of N-acetyl-5-glutamyl phosphate to yield N-acetyl-L-glutamate 5-semialdehyde. This chain is N-acetyl-gamma-glutamyl-phosphate reductase, found in Bradyrhizobium sp. (strain ORS 278).